The following is a 536-amino-acid chain: Subtilisin-like proteinase Spm1 (536 aa).

The signal sequence occupies residues 1-15 (MKSVILLSLAACAVA). Positions 16-147 (APTAGVETIH…RYEEVKKDEC (132 aa)) are excised as a propeptide. The region spanning 44–137 (YIIKFKKHVD…IERDTIVHTM (94 aa)) is the Inhibitor I9 domain. One can recognise a Peptidase S8 domain in the interval 156–462 (PWGLSRVSHR…GGCSNYFEIV (307 aa)). Active-site charge relay system residues include aspartate 192 and histidine 224. Residues asparagine 254 and asparagine 294 are each glycosylated (N-linked (GlcNAc...) asparagine). The active-site Charge relay system is the serine 390.

This sequence belongs to the peptidase S8 family.

The protein resides in the vacuole. In Pyricularia oryzae (strain 70-15 / ATCC MYA-4617 / FGSC 8958) (Rice blast fungus), this protein is Subtilisin-like proteinase Spm1 (SPM1).